Here is a 417-residue protein sequence, read N- to C-terminus: 4-hydroxy-3-methylbut-2-enyl diphosphate reductase (417 aa).

Cys56 provides a ligand contact to [4Fe-4S] cluster. A (2E)-4-hydroxy-3-methylbut-2-enyl diphosphate-binding site is contributed by His86. His86 is a binding site for dimethylallyl diphosphate. His86 provides a ligand contact to isopentenyl diphosphate. Cys151 contacts [4Fe-4S] cluster. His179 contacts (2E)-4-hydroxy-3-methylbut-2-enyl diphosphate. His179 serves as a coordination point for dimethylallyl diphosphate. His179 lines the isopentenyl diphosphate pocket. Glu181 functions as the Proton donor in the catalytic mechanism. Residue Thr244 coordinates (2E)-4-hydroxy-3-methylbut-2-enyl diphosphate. Position 282 (Cys282) interacts with [4Fe-4S] cluster. Ser311, Ser312, Asn313, and Ser374 together coordinate (2E)-4-hydroxy-3-methylbut-2-enyl diphosphate. 4 residues coordinate dimethylallyl diphosphate: Ser311, Ser312, Asn313, and Ser374. 4 residues coordinate isopentenyl diphosphate: Ser311, Ser312, Asn313, and Ser374.

This sequence belongs to the IspH family. Requires [4Fe-4S] cluster as cofactor.

The enzyme catalyses isopentenyl diphosphate + 2 oxidized [2Fe-2S]-[ferredoxin] + H2O = (2E)-4-hydroxy-3-methylbut-2-enyl diphosphate + 2 reduced [2Fe-2S]-[ferredoxin] + 2 H(+). It carries out the reaction dimethylallyl diphosphate + 2 oxidized [2Fe-2S]-[ferredoxin] + H2O = (2E)-4-hydroxy-3-methylbut-2-enyl diphosphate + 2 reduced [2Fe-2S]-[ferredoxin] + 2 H(+). It participates in isoprenoid biosynthesis; dimethylallyl diphosphate biosynthesis; dimethylallyl diphosphate from (2E)-4-hydroxy-3-methylbutenyl diphosphate: step 1/1. It functions in the pathway isoprenoid biosynthesis; isopentenyl diphosphate biosynthesis via DXP pathway; isopentenyl diphosphate from 1-deoxy-D-xylulose 5-phosphate: step 6/6. Functionally, catalyzes the conversion of 1-hydroxy-2-methyl-2-(E)-butenyl 4-diphosphate (HMBPP) into a mixture of isopentenyl diphosphate (IPP) and dimethylallyl diphosphate (DMAPP). Acts in the terminal step of the DOXP/MEP pathway for isoprenoid precursor biosynthesis. The polypeptide is 4-hydroxy-3-methylbut-2-enyl diphosphate reductase (Gloeobacter violaceus (strain ATCC 29082 / PCC 7421)).